The sequence spans 690 residues: MMHFLSFCLSVASLVSYAGAASTFSPARPPALPLAVKSPYLSTWLSAGTDGGNGGYLAGQWPTFWFGQVTGWAGQIRVDNSTYTWMGAIPNTPTVNQTSFEYTSTSSVFTMRVGDMVEMKVKFLSPITPDDLRRQSLVFSYLDVDVESIDGKAHDIQVYADISAEWASGDRNAIAQWDYGVTDDGVAYHKVYRQTQLLFSENTEQAEWGEWYWATDDQDGLSYQSGPDVDVRGAFAKNGKLANSDDKNYRAISTNWPVFAFSRDLGSVKTSAGTLFSIGLAQDSAIQYSGKPEGTTVMPSLWKSYFSTATAALEFFHHDYAAAAALSKDLDDRISKDSIDAAGQDYLTITSLTVRQVFAAVQLTGTPEDPYIFMKEISSNGNMNTVDVIFPAHPIFLYTNPELLKLILKPIYEIQENGKYPNTYAMHDIGTHYPNATGHPKGDDEKMPLEECGNMVIMALAYAQKAKDNDYLSQHYPILNKWTTYLVEDSIYPANQISTDDFAGSLANQTNLALKGIIGIQAMAVISNTTGHPDDASNHSSIAKDYIARWQTLGVAHDANPPHTTLSYGANETHGLLYNLYADRELGLNLVPQSVYDMQNTFYPTVKEKYGVPLDTRHVYTKADWELFTAAVASESVRDMFHQALATWINETPTNRAFTDLYDTQTGNYPAGITFIARPVMGGAFALLIL.

Positions 1–20 (MMHFLSFCLSVASLVSYAGA) are cleaved as a signal peptide. Asn-80, Asn-96, Asn-435, Asn-508, Asn-528, Asn-538, and Asn-571 each carry an N-linked (GlcNAc...) asparagine glycan.

This sequence belongs to the fungal glutaminase gtaA family.

It localises to the secreted. It catalyses the reaction L-glutamine + H2O = L-glutamate + NH4(+). With respect to regulation, activity is inhibited by about 80% in the presence of 18% sodium chloride. Glutaminase catalyzes the hydrolysis of glutamine to glutamic acid and plays a key role in nitrogen metabolism. Catalyzes the hydrolysis not only of L-glutamine but also of D-glutamine. In Aspergillus oryzae (strain ATCC 42149 / RIB 40) (Yellow koji mold), this protein is Glutaminase A.